The following is a 98-amino-acid chain: NADH-ubiquinone oxidoreductase chain 4L (98 aa).

The next 3 membrane-spanning stretches (helical) occupy residues 1-21 (MTPT…GLTF), 26-46 (LLSA…SMAL), and 59-79 (APML…ALLV).

Belongs to the complex I subunit 4L family. In terms of assembly, core subunit of respiratory chain NADH dehydrogenase (Complex I) which is composed of 45 different subunits.

It localises to the mitochondrion inner membrane. It catalyses the reaction a ubiquinone + NADH + 5 H(+)(in) = a ubiquinol + NAD(+) + 4 H(+)(out). Its function is as follows. Core subunit of the mitochondrial membrane respiratory chain NADH dehydrogenase (Complex I) which catalyzes electron transfer from NADH through the respiratory chain, using ubiquinone as an electron acceptor. Part of the enzyme membrane arm which is embedded in the lipid bilayer and involved in proton translocation. The sequence is that of NADH-ubiquinone oxidoreductase chain 4L (mt-nd4l) from Danio rerio (Zebrafish).